The sequence spans 415 residues: MDHEHVREVDPEVADALAGERDRQEQTLAMIASENHVSEAVLEAQGSVLTNKYAEGYPGERYYAGCEYADEVETLAIDRAKELWGADHVNVQPHSGTQANQAVYYAVLDPGDKILSLDLNHGGHLSHGHPANFTGQIYEVEQYEVDADTGYIDYEGLREAAEEFEPDIVVSGYSAYPRTVDWEEIQAAADAVDAYHLADIAHITGLVAAGVHPSPVGVADFVTGSTHKTIRAGRGGIVMCDEEFADDIDKAVFPGGQGGPLMHNIAGKAVGFKEALDPSFDEYAQNVVDNAEVLAETLQDHGFSLVSGGTDNHLVLVDLRDSHPDLPGGDAADALAAANIVLNGNTVPGETRSPFNPSGIRVGTAGVTTRGFDADVMEEVGDLIHRVVDNVDSDDVIYEVGERVVELCDEHPLYE.

(6S)-5,6,7,8-tetrahydrofolate-binding positions include Leu119 and 123–125 (GHL). Residue Lys228 is modified to N6-(pyridoxal phosphate)lysine. 353–355 (SPF) serves as a coordination point for (6S)-5,6,7,8-tetrahydrofolate.

The protein belongs to the SHMT family. As to quaternary structure, homodimer. The cofactor is pyridoxal 5'-phosphate.

It is found in the cytoplasm. It catalyses the reaction (6R)-5,10-methylene-5,6,7,8-tetrahydrofolate + glycine + H2O = (6S)-5,6,7,8-tetrahydrofolate + L-serine. It functions in the pathway one-carbon metabolism; tetrahydrofolate interconversion. It participates in amino-acid biosynthesis; glycine biosynthesis; glycine from L-serine: step 1/1. In terms of biological role, catalyzes the reversible interconversion of serine and glycine with tetrahydrofolate (THF) serving as the one-carbon carrier. Also exhibits THF-independent aldolase activity toward beta-hydroxyamino acids, producing glycine and aldehydes, via a retro-aldol mechanism. The protein is Serine hydroxymethyltransferase of Halorubrum lacusprofundi (strain ATCC 49239 / DSM 5036 / JCM 8891 / ACAM 34).